Reading from the N-terminus, the 55-residue chain is Large ribosomal subunit protein bL33 (55 aa).

This sequence belongs to the bacterial ribosomal protein bL33 family.

The protein is Large ribosomal subunit protein bL33 of Vibrio cholerae serotype O1 (strain ATCC 39541 / Classical Ogawa 395 / O395).